The primary structure comprises 457 residues: Oxysterol-binding protein-related protein 3C (457 aa).

Disordered stretches follow at residues 37 to 61 (NEGV…KGRW) and 363 to 393 (QGDL…KGQK). Basic and acidic residues-rich tracts occupy residues 47–61 (GGKE…KGRW) and 370–391 (GSEK…ETKG).

This sequence belongs to the OSBP family. In terms of tissue distribution, expressed in roots, leaves, stems and flowers.

Functionally, may be involved in the transport of sterols. This chain is Oxysterol-binding protein-related protein 3C (ORP3C), found in Arabidopsis thaliana (Mouse-ear cress).